Here is a 24-residue protein sequence, read N- to C-terminus: Brevinin-1Pa (24 aa).

A disulfide bridge links cysteine 18 with cysteine 24.

Expressed by the skin glands.

It is found in the secreted. Functionally, antibacterial activity against Gram-positive bacterium S.aureus and Gram-negative bacterium E.coli. Has activity against C.albicans. The polypeptide is Brevinin-1Pa (Lithobates pipiens (Northern leopard frog)).